Consider the following 172-residue polypeptide: Adenine phosphoribosyltransferase (172 aa).

This sequence belongs to the purine/pyrimidine phosphoribosyltransferase family. In terms of assembly, homodimer.

It is found in the cytoplasm. It carries out the reaction AMP + diphosphate = 5-phospho-alpha-D-ribose 1-diphosphate + adenine. It participates in purine metabolism; AMP biosynthesis via salvage pathway; AMP from adenine: step 1/1. In terms of biological role, catalyzes a salvage reaction resulting in the formation of AMP, that is energically less costly than de novo synthesis. The chain is Adenine phosphoribosyltransferase from Clostridium tetani (strain Massachusetts / E88).